The primary structure comprises 269 residues: Putative pyruvate, phosphate dikinase regulatory protein (269 aa).

151–158 (GVSRSSKT) contacts ADP.

Belongs to the pyruvate, phosphate/water dikinase regulatory protein family. PDRP subfamily.

It catalyses the reaction N(tele)-phospho-L-histidyl/L-threonyl-[pyruvate, phosphate dikinase] + ADP = N(tele)-phospho-L-histidyl/O-phospho-L-threonyl-[pyruvate, phosphate dikinase] + AMP + H(+). It carries out the reaction N(tele)-phospho-L-histidyl/O-phospho-L-threonyl-[pyruvate, phosphate dikinase] + phosphate + H(+) = N(tele)-phospho-L-histidyl/L-threonyl-[pyruvate, phosphate dikinase] + diphosphate. Functionally, bifunctional serine/threonine kinase and phosphorylase involved in the regulation of the pyruvate, phosphate dikinase (PPDK) by catalyzing its phosphorylation/dephosphorylation. The protein is Putative pyruvate, phosphate dikinase regulatory protein of Geobacter sulfurreducens (strain ATCC 51573 / DSM 12127 / PCA).